The chain runs to 204 residues: Neurensin-2 (204 aa).

Helical transmembrane passes span 66-86 and 122-142; these read LSSG…GYAV and LCVA…IGWL. The tract at residues 178–204 is disordered; it reads SGQSWFSPPASPFGQSSVQTIQPKRDS. Residues 190-204 show a composition bias toward polar residues; the sequence is FGQSSVQTIQPKRDS.

The protein belongs to the VMP family.

It localises to the membrane. Functionally, may play a role in maintenance and/or transport of vesicles. The protein is Neurensin-2 (NRSN2) of Homo sapiens (Human).